A 287-amino-acid chain; its full sequence is Large ribosomal subunit protein uL2 (287 aa).

The tract at residues 221-287 is disordered; that stretch reads RGSVMNPCDH…SKRSRGGRDS (67 aa). Residues 258 to 287 show a composition bias toward basic residues; it reads KTRKKNKPSNKLVVRRRRRISKRSRGGRDS.

Belongs to the universal ribosomal protein uL2 family. As to quaternary structure, part of the 50S ribosomal subunit. Forms a bridge to the 30S subunit in the 70S ribosome.

Functionally, one of the primary rRNA binding proteins. Required for association of the 30S and 50S subunits to form the 70S ribosome, for tRNA binding and peptide bond formation. It has been suggested to have peptidyltransferase activity; this is somewhat controversial. Makes several contacts with the 16S rRNA in the 70S ribosome. The protein is Large ribosomal subunit protein uL2 of Prochlorococcus marinus subsp. pastoris (strain CCMP1986 / NIES-2087 / MED4).